The following is a 189-amino-acid chain: NADH-quinone oxidoreductase subunit B (189 aa).

4 residues coordinate [4Fe-4S] cluster: Cys-39, Cys-40, Cys-104, and Cys-135.

The protein belongs to the complex I 20 kDa subunit family. As to quaternary structure, NDH-1 is composed of 14 different subunits. Subunits NuoB, C, D, E, F, and G constitute the peripheral sector of the complex. [4Fe-4S] cluster serves as cofactor.

The protein localises to the cell inner membrane. It carries out the reaction a quinone + NADH + 5 H(+)(in) = a quinol + NAD(+) + 4 H(+)(out). In terms of biological role, NDH-1 shuttles electrons from NADH, via FMN and iron-sulfur (Fe-S) centers, to quinones in the respiratory chain. The immediate electron acceptor for the enzyme in this species is believed to be a menaquinone. Couples the redox reaction to proton translocation (for every two electrons transferred, four hydrogen ions are translocated across the cytoplasmic membrane), and thus conserves the redox energy in a proton gradient. In Chlorobium luteolum (strain DSM 273 / BCRC 81028 / 2530) (Pelodictyon luteolum), this protein is NADH-quinone oxidoreductase subunit B.